The chain runs to 159 residues: MDPLTHFDEKGGARMVDVSLKGDTRREAVARGRVLMHRDTFRRVRDGQIAKGDVLAVARLAGIMAAKRTSDLIPLCHPLSLTGVDLHFTLDELHSTVEIESRVKTTGKTGVEMEALTAVSVAALTIYDMCKAMDKNMVVSDIRLVEKTGGKSGHYIREE.

Substrate is bound by residues 75–77 (LCH) and 113–114 (ME). Aspartate 128 is a catalytic residue.

Belongs to the MoaC family. In terms of assembly, homohexamer; trimer of dimers.

The catalysed reaction is (8S)-3',8-cyclo-7,8-dihydroguanosine 5'-triphosphate = cyclic pyranopterin phosphate + diphosphate. Its pathway is cofactor biosynthesis; molybdopterin biosynthesis. Its function is as follows. Catalyzes the conversion of (8S)-3',8-cyclo-7,8-dihydroguanosine 5'-triphosphate to cyclic pyranopterin monophosphate (cPMP). The sequence is that of Cyclic pyranopterin monophosphate synthase from Heliobacterium modesticaldum (strain ATCC 51547 / Ice1).